Consider the following 338-residue polypeptide: Cytochrome bd ubiquinol oxidase subunit 2 (338 aa).

9 helical membrane passes run 7-27 (LWFI…GFDF), 50-70 (IGPF…AIFA), 75-95 (WYAT…LALM), 119-139 (VVFF…TTLF), 163-183 (ILGG…FITL), 196-216 (MAQK…ALSA), 227-247 (EITI…AVFI), 256-276 (FGMT…SLFP), and 306-326 (IAAL…YYVF).

The protein belongs to the cytochrome ubiquinol oxidase subunit 2 family. As to quaternary structure, heterodimer of subunits I and II. It depends on heme b as a cofactor. Heme d cis-diol serves as cofactor.

The protein resides in the cell membrane. It catalyses the reaction 2 a ubiquinol + O2(in) + 4 H(+)(in) = 2 a ubiquinone + 2 H2O(in) + 4 H(+)(out). The sequence is that of Cytochrome bd ubiquinol oxidase subunit 2 (cydB) from Bacillus subtilis (strain 168).